Reading from the N-terminus, the 188-residue chain is Large ribosomal subunit protein uL5 (188 aa).

This sequence belongs to the universal ribosomal protein uL5 family. As to quaternary structure, part of the 50S ribosomal subunit; contacts the 5S rRNA and probably tRNA. Forms a bridge to the 30S subunit in the 70S ribosome.

This is one of the proteins that bind and probably mediate the attachment of the 5S RNA into the large ribosomal subunit, where it forms part of the central protuberance. In the 70S ribosome it contacts protein S13 of the 30S subunit (bridge B1b), connecting the 2 subunits; this bridge is implicated in subunit movement. May contact the P site tRNA; the 5S rRNA and some of its associated proteins might help stabilize positioning of ribosome-bound tRNAs. The protein is Large ribosomal subunit protein uL5 of Pyrococcus horikoshii (strain ATCC 700860 / DSM 12428 / JCM 9974 / NBRC 100139 / OT-3).